Consider the following 218-residue polypeptide: MAEITAKLVKELRDKTSAGMMDCKKALIENKGDMDKSIEWLRQKGIASAEKKSGRVAAEGAVGSYIHTGSRVGVLLELNCETDFVARGDLFQGLLRDLSMQVAACPSVEYVSVDQIPESIANKEKEIEMGRDDLSGKPDQIKAKIVEGRIGKRLKEMALLEQPFIKDSSINVEELVKQVAGKIGENIRVRRFTRYILGEGIEVQGPDFAEEVASMTSG.

Residues 82-85 (TDFV) are involved in Mg(2+) ion dislocation from EF-Tu.

This sequence belongs to the EF-Ts family.

It is found in the cytoplasm. Functionally, associates with the EF-Tu.GDP complex and induces the exchange of GDP to GTP. It remains bound to the aminoacyl-tRNA.EF-Tu.GTP complex up to the GTP hydrolysis stage on the ribosome. This Prochlorococcus marinus (strain NATL2A) protein is Elongation factor Ts.